The following is a 514-amino-acid chain: Cobyric acid synthase (514 aa).

Residues 258–458 (ALMVGVVRLP…IHGIFDNDGL (201 aa)) form the GATase cobBQ-type domain. Residue C339 is the Nucleophile of the active site. H450 is an active-site residue.

Belongs to the CobB/CobQ family. CobQ subfamily.

It functions in the pathway cofactor biosynthesis; adenosylcobalamin biosynthesis. Catalyzes amidations at positions B, D, E, and G on adenosylcobyrinic A,C-diamide. NH(2) groups are provided by glutamine, and one molecule of ATP is hydrogenolyzed for each amidation. The protein is Cobyric acid synthase of Syntrophobacter fumaroxidans (strain DSM 10017 / MPOB).